Consider the following 151-residue polypeptide: Aspartate carbamoyltransferase regulatory chain (151 aa).

Residues Cys107, Cys112, Cys135, and Cys138 each contribute to the Zn(2+) site.

It belongs to the PyrI family. In terms of assembly, contains catalytic and regulatory chains. Requires Zn(2+) as cofactor.

Involved in allosteric regulation of aspartate carbamoyltransferase. The chain is Aspartate carbamoyltransferase regulatory chain from Thermococcus onnurineus (strain NA1).